Here is a 332-residue protein sequence, read N- to C-terminus: Phospho-N-acetylmuramoyl-pentapeptide-transferase (332 aa).

A run of 8 helical transmembrane segments spans residues 9–29 (IYTIIIGFFITLILGPLIIPF), 55–75 (TIGGLIIIASVLVTSFTAGLI), 79–99 (LWVAIGAMVAFGLIGFIDDFI), 115–135 (MSLQIIVAVFLAIYQSNISVM), 155–175 (IPQYLDLGILYIPFIVFVVVA), 196–216 (IVAAFFSILAMEWGYPSLAIF), 253–273 (AVAILMNVALIVPIVGGIYFA), and 312–332 (VVIVFWIVTVILCLIGMLGLN).

It belongs to the glycosyltransferase 4 family. MraY subfamily. Mg(2+) serves as cofactor.

The protein localises to the cell membrane. It catalyses the reaction UDP-N-acetyl-alpha-D-muramoyl-L-alanyl-gamma-D-glutamyl-meso-2,6-diaminopimeloyl-D-alanyl-D-alanine + di-trans,octa-cis-undecaprenyl phosphate = di-trans,octa-cis-undecaprenyl diphospho-N-acetyl-alpha-D-muramoyl-L-alanyl-D-glutamyl-meso-2,6-diaminopimeloyl-D-alanyl-D-alanine + UMP. Its pathway is cell wall biogenesis; peptidoglycan biosynthesis. Catalyzes the initial step of the lipid cycle reactions in the biosynthesis of the cell wall peptidoglycan: transfers peptidoglycan precursor phospho-MurNAc-pentapeptide from UDP-MurNAc-pentapeptide onto the lipid carrier undecaprenyl phosphate, yielding undecaprenyl-pyrophosphoryl-MurNAc-pentapeptide, known as lipid I. The sequence is that of Phospho-N-acetylmuramoyl-pentapeptide-transferase from Alkaliphilus oremlandii (strain OhILAs) (Clostridium oremlandii (strain OhILAs)).